The sequence spans 72 residues: Osmotically-inducible lipoprotein B (72 aa).

An N-terminal signal peptide occupies residues 1–23 (MFVTSKKMTAAVLAITLAMSLSA). Cys24 carries the N-palmitoyl cysteine lipid modification. The S-diacylglycerol cysteine moiety is linked to residue Cys24.

It is found in the cell membrane. In terms of biological role, provides resistance to osmotic stress. May be important for stationary-phase survival. The polypeptide is Osmotically-inducible lipoprotein B (osmB) (Escherichia coli O157:H7).